A 370-amino-acid polypeptide reads, in one-letter code: 3-isopropylmalate dehydrogenase (370 aa).

Residue 77–90 coordinates NAD(+); the sequence is GAKWDGVPYEARPE. Residues Arg97, Arg107, Arg135, and Asp226 each coordinate substrate. Positions 226, 250, and 254 each coordinate Mg(2+). Residue 290–302 coordinates NAD(+); sequence GSAPDIAGKGLAN.

This sequence belongs to the isocitrate and isopropylmalate dehydrogenases family. LeuB type 1 subfamily. As to quaternary structure, homodimer. Mg(2+) serves as cofactor. It depends on Mn(2+) as a cofactor.

Its subcellular location is the cytoplasm. The enzyme catalyses (2R,3S)-3-isopropylmalate + NAD(+) = 4-methyl-2-oxopentanoate + CO2 + NADH. Its pathway is amino-acid biosynthesis; L-leucine biosynthesis; L-leucine from 3-methyl-2-oxobutanoate: step 3/4. In terms of biological role, catalyzes the oxidation of 3-carboxy-2-hydroxy-4-methylpentanoate (3-isopropylmalate) to 3-carboxy-4-methyl-2-oxopentanoate. The product decarboxylates to 4-methyl-2 oxopentanoate. In Rhodopseudomonas palustris (strain BisB18), this protein is 3-isopropylmalate dehydrogenase.